The sequence spans 105 residues: uncharacterized protein (105 aa).

Residues 25 to 47 (AHSVTLLFGIFRSSPFLLLFLLI) traverse the membrane as a helical segment. The disordered stretch occupies residues 54–89 (GRGSQRMKKKRGRANPSENLRERADPTNGPAENGKK).

The protein resides in the membrane. This is an uncharacterized protein from Saccharomyces cerevisiae (strain ATCC 204508 / S288c) (Baker's yeast).